Reading from the N-terminus, the 490-residue chain is MLDFEQLSPAIPLQSVLCVGDLMLDEFVYGEVSRISPEAPAPVIAAQRSEIDVGGAGNVARNIASLGARCVFIGLVGDDDAGRTLQTTLAKDALITPVLVCDPSRPTTRKVRFVSEHFSTHMLRADWEVAAPASAAVEQQLIDAVLKQLPAADIVLLSDYAKGVLTARLIRETIDAAKKLGKRVIVDPKSPNFALYRGATLLTPNRKEFCEATRSRADSAAEIATAAREAMDVADCEALLVTQSERGMTLVVREGEAIHVPAHPVKVRDVSGAGDTVAAVLAVMLAAGADWDIALRAANAGAAVAVSKKGTASVSLAELRRKILPHAFLAAEEKIVAAGGDLAPHLAEWRAEGFRIGFTNGCFDILHPGHVKVLTAARAACDRLIVGLNSDASVRRLKGETRPVQDERARAEVLAALEAVDLVAIFDEDTPLRLITEIKPSVLVKGGDYTREQVVGHEVVAANGGEVLLIDILPGHSTTSLVARAQNGKS.

Residues 1 to 330 (MLDFEQLSPA…RKILPHAFLA (330 aa)) form a ribokinase region. Position 205–208 (205–208 (NRKE)) interacts with ATP. The active site involves Asp275. The interval 358–490 (FTNGCFDILH…LVARAQNGKS (133 aa)) is cytidylyltransferase.

The protein in the N-terminal section; belongs to the carbohydrate kinase PfkB family. In the C-terminal section; belongs to the cytidylyltransferase family. As to quaternary structure, homodimer.

The enzyme catalyses D-glycero-beta-D-manno-heptose 7-phosphate + ATP = D-glycero-beta-D-manno-heptose 1,7-bisphosphate + ADP + H(+). It catalyses the reaction D-glycero-beta-D-manno-heptose 1-phosphate + ATP + H(+) = ADP-D-glycero-beta-D-manno-heptose + diphosphate. It functions in the pathway nucleotide-sugar biosynthesis; ADP-L-glycero-beta-D-manno-heptose biosynthesis; ADP-L-glycero-beta-D-manno-heptose from D-glycero-beta-D-manno-heptose 7-phosphate: step 1/4. The protein operates within nucleotide-sugar biosynthesis; ADP-L-glycero-beta-D-manno-heptose biosynthesis; ADP-L-glycero-beta-D-manno-heptose from D-glycero-beta-D-manno-heptose 7-phosphate: step 3/4. In terms of biological role, catalyzes the phosphorylation of D-glycero-D-manno-heptose 7-phosphate at the C-1 position to selectively form D-glycero-beta-D-manno-heptose-1,7-bisphosphate. Functionally, catalyzes the ADP transfer from ATP to D-glycero-beta-D-manno-heptose 1-phosphate, yielding ADP-D-glycero-beta-D-manno-heptose. The polypeptide is Bifunctional protein HldE (Rhodopseudomonas palustris (strain BisA53)).